Here is a 696-residue protein sequence, read N- to C-terminus: Elongation factor G (696 aa).

Residues 8-288 enclose the tr-type G domain; it reads EDYRNFGIMA…AVVDFLPSPI (281 aa). Residues 17–24, 86–90, and 140–143 each bind GTP; these read AHIDAGKT, DTPGH, and NKMD.

It belongs to the TRAFAC class translation factor GTPase superfamily. Classic translation factor GTPase family. EF-G/EF-2 subfamily.

The protein localises to the cytoplasm. In terms of biological role, catalyzes the GTP-dependent ribosomal translocation step during translation elongation. During this step, the ribosome changes from the pre-translocational (PRE) to the post-translocational (POST) state as the newly formed A-site-bound peptidyl-tRNA and P-site-bound deacylated tRNA move to the P and E sites, respectively. Catalyzes the coordinated movement of the two tRNA molecules, the mRNA and conformational changes in the ribosome. This is Elongation factor G from Chelativorans sp. (strain BNC1).